The sequence spans 222 residues: RNA chaperone ProQ (222 aa).

The span at 94–113 (EHADHAKQQLDESKAKAAEK) shows a compositional bias: basic and acidic residues. The tract at residues 94-171 (EHADHAKQQL…PAKLTDSDLQ (78 aa)) is disordered. The segment covering 114 to 131 (RKAKLAQQPKRKDKRQFN) has biased composition (basic residues). Positions 133–148 (PKGEKSANSDHADTKR) are enriched in basic and acidic residues. Over residues 155-164 (NRPNTTPPAK) the composition is skewed to low complexity.

The protein belongs to the ProQ family.

It is found in the cytoplasm. Its function is as follows. RNA chaperone with significant RNA binding, RNA strand exchange and RNA duplexing activities. This chain is RNA chaperone ProQ, found in Alteromonas mediterranea (strain DSM 17117 / CIP 110805 / LMG 28347 / Deep ecotype).